Consider the following 592-residue polypeptide: V-type ATP synthase alpha chain (592 aa).

233–240 contacts ATP; that stretch reads GPFGSGKT.

It belongs to the ATPase alpha/beta chains family.

The enzyme catalyses ATP + H2O + 4 H(+)(in) = ADP + phosphate + 5 H(+)(out). Its function is as follows. Produces ATP from ADP in the presence of a proton gradient across the membrane. The V-type alpha chain is a catalytic subunit. The chain is V-type ATP synthase alpha chain from Clostridium botulinum (strain Okra / Type B1).